The chain runs to 529 residues: Delayed-rectifier potassium channel regulatory subunit KCNS1 (529 aa).

Topologically, residues 1–217 are cytoplasmic; sequence MLMLLVRGTH…LTMENPGYSL (217 aa). The chain crosses the membrane as a helical span at residues 218-239; that stretch reads PSKLFSCVSISVVLASIAAMCI. Topologically, residues 240-270 are extracellular; the sequence is HSLPEYQAREAAAAVAAVAAGRSPEGVRDDP. A helical transmembrane segment spans residues 271 to 293; the sequence is VLRRLEYFCIAWFSFEVSSRLLL. At 294 to 304 the chain is on the cytoplasmic side; it reads APSTRNFFCHP. The chain crosses the membrane as a helical span at residues 305-322; that stretch reads LNLIDIVSVLPFYLTLLA. At 323 to 340 the chain is on the extracellular side; it reads GVALGDQGGTGGKELGHL. Residues 341 to 361 form a helical; Voltage-sensor membrane-spanning segment; it reads GKVVQVFRLMRIFRVLKLARH. The Cytoplasmic segment spans residues 362–376; the sequence is STGLRSLGATLKHSY. Residues 377–398 traverse the membrane as a helical segment; sequence REVGILLLYLAVGVSVFSGVAY. The Extracellular portion of the chain corresponds to 399–411; the sequence is TAEKEEDVGFNTI. An intramembrane region (helical) is located at residues 412–423; sequence PACWWWGTVSMT. The Selectivity filter motif lies at 424 to 429; it reads TVGYGD. The stretch at 424–431 is an intramembrane region; the sequence is TVGYGDVV. Over 432 to 438 the chain is Extracellular; that stretch reads PVTVAGK. Residues 439-467 traverse the membrane as a helical segment; it reads LAASGCILGGILVVALPITIIFNKFSHFY. Residues 468-529 lie on the Cytoplasmic side of the membrane; that stretch reads RRQKALEAAV…PSEPPHPQMY (62 aa). Residues 494–529 form a disordered region; that stretch reads GVSEASLETSRETSQEGRSADLETQAPSEPPHPQMY. Residues 502 to 514 are compositionally biased toward basic and acidic residues; that stretch reads TSRETSQEGRSAD.

Belongs to the potassium channel family. S (TC 1.A.1.2) subfamily. Kv9.1/KCNS1 sub-subfamily. In terms of assembly, heterotetramer with KCNB1. Heterotetramer with KCNB2. Does not form homomultimers.

The protein resides in the cell membrane. Its function is as follows. Potassium channel regulatory subunit that modulate the delayed rectifier voltage-gated potassium channel activity of KCNB1 and KCNB2 by altering their kinetics, expression levels, and shifting the half-inactivation potential to more polarized values. While it does not form functional channels on its own, it can form functional heterotetrameric channels with KCNB1 and KCNB2. Each regulatory subunit has unique regulatory properties that can lead to extensive inhibition, significant changes in kinetics, and/or substantial shifts in the voltage dependencies of the inactivation process. The polypeptide is Delayed-rectifier potassium channel regulatory subunit KCNS1 (Chlorocebus aethiops (Green monkey)).